Reading from the N-terminus, the 169-residue chain is Disulfide bond formation protein B (169 aa).

Over 1–8 (MRLSVRWV) the chain is Cytoplasmic. Residues 9-25 (FFLGFFLCALMLAIAGY) form a helical membrane-spanning segment. Residues 26 to 43 (FQFVENLEPCPLCILSRV) lie on the Periplasmic side of the membrane. C35 and C38 are oxidised to a cystine. A helical membrane pass occupies residues 44–60 (AVLAIGGVFLVAALHNP). The Cytoplasmic segment spans residues 61-67 (KSWGIKV). Residues 68–84 (YALLGFVVTLIGIGITG) traverse the membrane as a helical segment. Residues 85–141 (RHVWLQSLPADQVPACGPGLNFMLDNFPLTETLELVFRGSGECAEVQWSFLGLTIPG) lie on the Periplasmic side of the membrane. A disulfide bond links C100 and C127. The chain crosses the membrane as a helical span at residues 142–160 (WTLVAFLFLGVISLWQMGR). At 161–169 (TGGGAGKLT) the chain is on the cytoplasmic side.

The protein belongs to the DsbB family.

The protein localises to the cell inner membrane. Required for disulfide bond formation in some periplasmic proteins. Acts by oxidizing the DsbA protein. This is Disulfide bond formation protein B from Nitrosococcus oceani (strain ATCC 19707 / BCRC 17464 / JCM 30415 / NCIMB 11848 / C-107).